The sequence spans 109 residues: T cell receptor alpha variable 27 (109 aa).

Positions 1–19 (MVLKFSVSILWIQLAWVST) are cleaved as a signal peptide. One can recognise an Ig-like domain in the interval 20–109 (QLLEQSPQFL…GDTGLYLCAG (90 aa)). 2 N-linked (GlcNAc...) asparagine glycosylation sites follow: N36 and N42. An intrachain disulfide couples C41 to C107.

As to quaternary structure, alpha-beta TR is a heterodimer composed of an alpha and beta chain; disulfide-linked. The alpha-beta TR is associated with the transmembrane signaling CD3 coreceptor proteins to form the TR-CD3 (TcR or TCR). The assembly of alpha-beta TR heterodimers with CD3 occurs in the endoplasmic reticulum where a single alpha-beta TR heterodimer associates with one CD3D-CD3E heterodimer, one CD3G-CD3E heterodimer and one CD247 homodimer forming a stable octameric structure. CD3D-CD3E and CD3G-CD3E heterodimers preferentially associate with TR alpha and TR beta chains, respectively. The association of the CD247 homodimer is the last step of TcR assembly in the endoplasmic reticulum and is required for transport to the cell surface. In terms of assembly, (Microbial infection) Interacts with Staphylococcus aureus enterotoxin H/entH.

The protein localises to the cell membrane. Functionally, v region of the variable domain of T cell receptor (TR) alpha chain that participates in the antigen recognition. Alpha-beta T cell receptors are antigen specific receptors which are essential to the immune response and are present on the cell surface of T lymphocytes. Recognize peptide-major histocompatibility (MH) (pMH) complexes that are displayed by antigen presenting cells (APC), a prerequisite for efficient T cell adaptive immunity against pathogens. Binding of alpha-beta TR to pMH complex initiates TR-CD3 clustering on the cell surface and intracellular activation of LCK that phosphorylates the ITAM motifs of CD3G, CD3D, CD3E and CD247 enabling the recruitment of ZAP70. In turn, ZAP70 phosphorylates LAT, which recruits numerous signaling molecules to form the LAT signalosome. The LAT signalosome propagates signal branching to three major signaling pathways, the calcium, the mitogen-activated protein kinase (MAPK) kinase and the nuclear factor NF-kappa-B (NF-kB) pathways, leading to the mobilization of transcription factors that are critical for gene expression and essential for T cell growth and differentiation. The T cell repertoire is generated in the thymus, by V-(D)-J rearrangement. This repertoire is then shaped by intrathymic selection events to generate a peripheral T cell pool of self-MH restricted, non-autoaggressive T cells. Post-thymic interaction of alpha-beta TR with the pMH complexes shapes TR structural and functional avidity. The sequence is that of T cell receptor alpha variable 27 from Homo sapiens (Human).